Here is a 117-residue protein sequence, read N- to C-terminus: Non-specific lipid-transfer protein 3 (117 aa).

The signal sequence occupies residues 1–25 (MAGLVKLSCLVLACMIVAGPIATNA). 4 disulfides stabilise this stretch: Cys-29–Cys-76, Cys-39–Cys-53, Cys-54–Cys-99, and Cys-74–Cys-113.

The protein belongs to the plant LTP family.

In terms of biological role, plant non-specific lipid-transfer proteins transfer phospholipids as well as galactolipids across membranes. May play a role in wax or cutin deposition in the cell walls of expanding epidermal cells and certain secretory tissues. The protein is Non-specific lipid-transfer protein 3 (LTP3) of Brassica napus (Rape).